Reading from the N-terminus, the 430-residue chain is Phosphoserine aminotransferase 1, chloroplastic (430 aa).

The transit peptide at Met-1–Cys-51 directs the protein to the chloroplast. The residue at position 52 (Val-52) is an N-acetylvaline. Arg-111 lines the L-glutamate pocket. Residues Ala-145 to Thr-146, Trp-171, Thr-221, Asp-241, and Gln-264 each bind pyridoxal 5'-phosphate. Position 265 is an N6-(pyridoxal phosphate)lysine (Lys-265). Asn-306–Thr-307 contacts pyridoxal 5'-phosphate.

The protein belongs to the class-V pyridoxal-phosphate-dependent aminotransferase family. SerC subfamily. As to quaternary structure, homodimer. Pyridoxal 5'-phosphate is required as a cofactor. In terms of tissue distribution, ubiquitous, but expressed preferentially in light-grown roots and shoots. Detected in root meristems and in root tissues surrounding the vascular bundle.

The protein resides in the plastid. Its subcellular location is the chloroplast. The enzyme catalyses O-phospho-L-serine + 2-oxoglutarate = 3-phosphooxypyruvate + L-glutamate. The catalysed reaction is 4-(phosphooxy)-L-threonine + 2-oxoglutarate = (R)-3-hydroxy-2-oxo-4-phosphooxybutanoate + L-glutamate. It functions in the pathway amino-acid biosynthesis; L-serine biosynthesis; L-serine from 3-phospho-D-glycerate: step 2/3. The protein operates within cofactor biosynthesis; pyridoxine 5'-phosphate biosynthesis; pyridoxine 5'-phosphate from D-erythrose 4-phosphate: step 3/5. Its activity is regulated as follows. Inhibited by high concentration of cysteine and by 3-phosphonooxypyruvate. Not inhibited by serine, threonine, valine, glycine, tryptophan and O-acetyl-L-serine. Involved in the plastidial phosphorylated pathway of serine biosynthesis (PPSB). Catalyzes the reversible conversion of 3-phosphohydroxypyruvate to phosphoserine. In Arabidopsis thaliana (Mouse-ear cress), this protein is Phosphoserine aminotransferase 1, chloroplastic.